A 44-amino-acid chain; its full sequence is Photosystem I reaction center subunit IX (44 aa).

A helical membrane pass occupies residues 7–27 (YLSVAPVISTLWFGSLAGLLI).

It belongs to the PsaJ family.

Its subcellular location is the plastid. The protein localises to the chloroplast thylakoid membrane. Its function is as follows. May help in the organization of the PsaE and PsaF subunits. This Populus alba (White poplar) protein is Photosystem I reaction center subunit IX.